A 480-amino-acid polypeptide reads, in one-letter code: Proline--tRNA ligase (480 aa).

It belongs to the class-II aminoacyl-tRNA synthetase family. ProS type 3 subfamily. In terms of assembly, homodimer.

It localises to the cytoplasm. The enzyme catalyses tRNA(Pro) + L-proline + ATP = L-prolyl-tRNA(Pro) + AMP + diphosphate. In terms of biological role, catalyzes the attachment of proline to tRNA(Pro) in a two-step reaction: proline is first activated by ATP to form Pro-AMP and then transferred to the acceptor end of tRNA(Pro). The polypeptide is Proline--tRNA ligase (Roseiflexus sp. (strain RS-1)).